Here is a 287-residue protein sequence, read N- to C-terminus: ATP synthase subunit a (287 aa).

Transmembrane regions (helical) follow at residues 37–57 (LDSV…MWLA), 96–116 (FIAP…AMDL), 149–169 (LGLS…IKGL), 187–207 (PVFA…EYVA), 224–244 (ELVF…LSGV), and 266–286 (TLQA…AHEA).

The protein belongs to the ATPase A chain family. F-type ATPases have 2 components, CF(1) - the catalytic core - and CF(0) - the membrane proton channel. CF(1) has five subunits: alpha(3), beta(3), gamma(1), delta(1), epsilon(1). CF(0) has three main subunits: a(1), b(2) and c(9-12). The alpha and beta chains form an alternating ring which encloses part of the gamma chain. CF(1) is attached to CF(0) by a central stalk formed by the gamma and epsilon chains, while a peripheral stalk is formed by the delta and b chains.

It is found in the cell inner membrane. Its function is as follows. Key component of the proton channel; it plays a direct role in the translocation of protons across the membrane. This is ATP synthase subunit a from Acidovorax sp. (strain JS42).